A 329-amino-acid polypeptide reads, in one-letter code: MSSTEPAAAAAGLAIPALGYGAANVGNLFRALSDDEAWAVLEAAWDAGIRYYDTAPHYGLGLSEKRLGAFLQTKPRDEFVVSTKAGRLLRPNPERRPSGLDTDNDFHVPDDLRREWDFTEQGIRASIAESQERLGLDRIDLLYLHDPERHDLDLALASAFPALEKVRAEGVVKAIGIGSMVSDALTRAVREADLDLIMVAGRYTLLEQPAATEVLPACAENATGIVAASVFNSGLLAQSEPKRDGRYEYGQLPDELWDRLVRIAAICRNHDVPLPAAAIQFPLQSALVRSVVVGGSRPAQLTQNAEYAALEIPAGLWAELAEARLIPTP.

Residue Tyr-58 is the Proton donor of the active site. Substrate is bound at residue His-145.

It belongs to the aldo/keto reductase family.

It carries out the reaction a D-threo-aldose + NAD(+) = a D-threo-aldono-1,5-lactone + NADH + H(+). Its activity is regulated as follows. Inhibited strongly by Hg(2+), Cd(2+) and para-chloromercuribenzoic acid (PCMB) and weakly by Zn(2+) and iodoacetamide. Also inhibited strongly by L-xylose but not D-glucose. In terms of biological role, catalyzes the oxidation of L-fucose to L-fuconolactone in the presence of NADP(+). Also active against L-galactose and, to a much lesser degree, D-arabinose. Uses NADP(+) as a hydrogen acceptor much more efficiently than NAD(+). This Pseudomonas sp protein is D-threo-aldose 1-dehydrogenase.